Reading from the N-terminus, the 220-residue chain is Fructose-6-phosphate aldolase (220 aa).

The active-site Schiff-base intermediate with substrate is the Lys-85.

The protein belongs to the transaldolase family. Type 3A subfamily. In terms of assembly, homodecamer.

It localises to the cytoplasm. It carries out the reaction beta-D-fructose 6-phosphate = dihydroxyacetone + D-glyceraldehyde 3-phosphate. Catalyzes the reversible formation of fructose 6-phosphate from dihydroxyacetone and D-glyceraldehyde 3-phosphate via an aldolization reaction. The protein is Fructose-6-phosphate aldolase of Salmonella choleraesuis (strain SC-B67).